A 371-amino-acid chain; its full sequence is Phosphate acyltransferase (371 aa).

It belongs to the PlsX family. As to quaternary structure, homodimer. Probably interacts with PlsY.

Its subcellular location is the cytoplasm. It catalyses the reaction a fatty acyl-[ACP] + phosphate = an acyl phosphate + holo-[ACP]. The protein operates within lipid metabolism; phospholipid metabolism. In terms of biological role, catalyzes the reversible formation of acyl-phosphate (acyl-PO(4)) from acyl-[acyl-carrier-protein] (acyl-ACP). This enzyme utilizes acyl-ACP as fatty acyl donor, but not acyl-CoA. This Polaromonas sp. (strain JS666 / ATCC BAA-500) protein is Phosphate acyltransferase.